Reading from the N-terminus, the 211-residue chain is Protein YCF54, chloroplastic (211 aa).

The N-terminal 80 residues, 1–80 (MWSVTGALTV…GESTKYHFLV (80 aa)), are a transit peptide targeting the chloroplast.

Belongs to the ycf54 family. In terms of assembly, interacts with LFNR1 and CRD1/CHL27 in chloroplasts.

It is found in the plastid. The protein localises to the chloroplast. In terms of biological role, involved in the biosynthesis of chlorophyll; acts probably as a scaffolding factor in the MgProto monomethylester (MgProtoME) cyclase complex to stabilize CRD1/CHL27, the catalytic subunit which catalyzes the formation of a fifth isocyclic ring to tetrapyrroles to form protochlorophyllide. The protein is Protein YCF54, chloroplastic of Arabidopsis thaliana (Mouse-ear cress).